A 426-amino-acid polypeptide reads, in one-letter code: 3-phosphoshikimate 1-carboxyvinyltransferase (426 aa).

Residues K21, S22, and R26 each contribute to the 3-phosphoshikimate site. Residue K21 participates in phosphoenolpyruvate binding. The phosphoenolpyruvate site is built by G92 and R122. S167, S168, Q169, S195, D315, and K342 together coordinate 3-phosphoshikimate. Position 169 (Q169) interacts with phosphoenolpyruvate. Catalysis depends on D315, which acts as the Proton acceptor. R346 and R386 together coordinate phosphoenolpyruvate.

It belongs to the EPSP synthase family. Monomer.

It is found in the cytoplasm. It catalyses the reaction 3-phosphoshikimate + phosphoenolpyruvate = 5-O-(1-carboxyvinyl)-3-phosphoshikimate + phosphate. It participates in metabolic intermediate biosynthesis; chorismate biosynthesis. Its function is as follows. Catalyzes the transfer of the enolpyruvyl moiety of phosphoenolpyruvate (PEP) to the 5-hydroxyl of shikimate-3-phosphate (S3P) to produce enolpyruvyl shikimate-3-phosphate and inorganic phosphate. In Methanosphaera stadtmanae (strain ATCC 43021 / DSM 3091 / JCM 11832 / MCB-3), this protein is 3-phosphoshikimate 1-carboxyvinyltransferase.